A 247-amino-acid chain; its full sequence is ATP synthase subunit a, chloroplastic (247 aa).

A run of 5 helical transmembrane segments spans residues 38–58 (QVLI…ALAV), 95–115 (VPFI…GALL), 134–154 (INTT…AGLA), 199–219 (LVVV…VMFL), and 220–240 (GLFT…AYIG).

Belongs to the ATPase A chain family. F-type ATPases have 2 components, CF(1) - the catalytic core - and CF(0) - the membrane proton channel. CF(1) has five subunits: alpha(3), beta(3), gamma(1), delta(1), epsilon(1). CF(0) has four main subunits: a, b, b' and c.

The protein localises to the plastid. It is found in the chloroplast thylakoid membrane. In terms of biological role, key component of the proton channel; it plays a direct role in the translocation of protons across the membrane. The polypeptide is ATP synthase subunit a, chloroplastic (Trachelium caeruleum (Blue throatwort)).